The following is a 103-amino-acid chain: Large ribosomal subunit protein bL21 (103 aa).

It belongs to the bacterial ribosomal protein bL21 family. As to quaternary structure, part of the 50S ribosomal subunit. Contacts protein L20.

In terms of biological role, this protein binds to 23S rRNA in the presence of protein L20. In Mycobacterium sp. (strain JLS), this protein is Large ribosomal subunit protein bL21.